Here is a 606-residue protein sequence, read N- to C-terminus: Probable potassium transport system protein Kup (606 aa).

Helical transmembrane passes span 18-38, 46-66, 97-117, 138-158, 166-186, 212-232, 247-267, 287-307, 339-359, 368-388, 395-415, and 418-438; these read GLVF…VFAL, VFGI…AEYA, LTFV…DGVI, GLHQ…LFVF, VAGA…LSGA, GLAG…GEAL, AWYI…AFII, LYIP…QAMI, IYIG…MLVF, AYGL…ILIL, WKAV…TACL, and LPHG…TILV.

It belongs to the HAK/KUP transporter (TC 2.A.72) family.

Its subcellular location is the cell inner membrane. The enzyme catalyses K(+)(in) + H(+)(in) = K(+)(out) + H(+)(out). Transport of potassium into the cell. Likely operates as a K(+):H(+) symporter. The polypeptide is Probable potassium transport system protein Kup (Trichlorobacter lovleyi (strain ATCC BAA-1151 / DSM 17278 / SZ) (Geobacter lovleyi)).